The chain runs to 401 residues: Deoxyhypusine synthase-like protein (401 aa).

This sequence belongs to the deoxyhypusine synthase family.

The sequence is that of Deoxyhypusine synthase-like protein from Thermosynechococcus vestitus (strain NIES-2133 / IAM M-273 / BP-1).